The primary structure comprises 318 residues: Deoxyribose-phosphate aldolase (318 aa).

Catalysis depends on Asp155, which acts as the Proton donor/acceptor. Lys218 functions as the Schiff-base intermediate with acetaldehyde in the catalytic mechanism. The active-site Proton donor/acceptor is the Lys254.

This sequence belongs to the DeoC/FbaB aldolase family. DeoC type 2 subfamily. As to quaternary structure, interacts with YBX1.

It is found in the cytoplasm. The protein localises to the cytoplasmic granule. Its subcellular location is the nucleus. The catalysed reaction is 2-deoxy-D-ribose 5-phosphate = D-glyceraldehyde 3-phosphate + acetaldehyde. It participates in carbohydrate degradation; 2-deoxy-D-ribose 1-phosphate degradation; D-glyceraldehyde 3-phosphate and acetaldehyde from 2-deoxy-alpha-D-ribose 1-phosphate: step 2/2. Its function is as follows. Catalyzes a reversible aldol reaction between acetaldehyde and D-glyceraldehyde 3-phosphate to generate 2-deoxy-D-ribose 5-phosphate. Participates in stress granule (SG) assembly. May allow ATP production from extracellular deoxyinosine in conditions of energy deprivation. In Bos taurus (Bovine), this protein is Deoxyribose-phosphate aldolase (DERA).